The sequence spans 281 residues: Probable superoxide dismutase [Fe] (281 aa).

His104, His152, Asp236, and His240 together coordinate Fe cation.

Belongs to the iron/manganese superoxide dismutase family. The cofactor is Fe cation.

It catalyses the reaction 2 superoxide + 2 H(+) = H2O2 + O2. Destroys superoxide anion radicals which are normally produced within the cells and which are toxic to biological systems. The polypeptide is Probable superoxide dismutase [Fe] (sodF) (Bacillus subtilis (strain 168)).